The following is a 260-amino-acid chain: Isoprenyl transferase (260 aa).

Residue D40 is part of the active site. D40 contacts Mg(2+). Residues 41 to 44, W45, R53, H57, and 85 to 87 each bind substrate; these read GNGR and STE. Catalysis depends on N88, which acts as the Proton acceptor. Substrate-binding positions include W89, R91, R208, and 214–216; that span reads RLS. Residue E227 participates in Mg(2+) binding.

The protein belongs to the UPP synthase family. In terms of assembly, homodimer. Mg(2+) serves as cofactor.

Its function is as follows. Catalyzes the condensation of isopentenyl diphosphate (IPP) with allylic pyrophosphates generating different type of terpenoids. The sequence is that of Isoprenyl transferase from Bacillus subtilis (strain 168).